The sequence spans 545 residues: Phenylalanine--tRNA ligase beta subunit (545 aa).

The 76-residue stretch at 268–343 (FLHKIQNVRE…MSIGYNNLEP (76 aa)) folds into the B5 domain. D321, D327, E330, and D331 together coordinate Mg(2+).

It belongs to the phenylalanyl-tRNA synthetase beta subunit family. Type 2 subfamily. As to quaternary structure, tetramer of two alpha and two beta subunits. Requires Mg(2+) as cofactor.

The protein resides in the cytoplasm. The enzyme catalyses tRNA(Phe) + L-phenylalanine + ATP = L-phenylalanyl-tRNA(Phe) + AMP + diphosphate + H(+). In Saccharolobus islandicus (strain Y.N.15.51 / Yellowstone #2) (Sulfolobus islandicus), this protein is Phenylalanine--tRNA ligase beta subunit.